A 587-amino-acid polypeptide reads, in one-letter code: ATF/CREB activator 2 (587 aa).

Disordered regions lie at residues Met1–Leu62, Leu123–Ser144, Asn169–Ala195, and Thr381–Thr423. Over residues Lys16–Ser29 the composition is skewed to basic and acidic residues. Low complexity-rich tracts occupy residues Ser39–Ala57 and Leu123–Gln134. 2 positions are modified to phosphoserine: Ser171 and Ser179. Basic and acidic residues predominate over residues Asn385–His395. A compositionally biased stretch (polar residues) spans Ser396–Asn418. Position 399 is a phosphoserine (Ser399). Positions Ala425–His488 constitute a bZIP domain. Positions Lys427 to Lys447 are basic motif. The leucine-zipper stretch occupies residues Leu453 to Leu467. Residues Ser552–Lys587 form a disordered region. Ser557 is subject to Phosphoserine. Thr559 carries the post-translational modification Phosphothreonine. The span at Asp565–Asp576 shows a compositional bias: basic and acidic residues. Residues Asn577 to Lys587 are compositionally biased toward polar residues.

The protein belongs to the bZIP family.

The protein localises to the nucleus. Its function is as follows. Transcriptional activator of promoters containing ATF/CREB sites. Can independently stimulate transcription through ATF/CREB sites. Important for a variety of biological functions including growth on non-optimal carbon sources. The sequence is that of ATF/CREB activator 2 (CST6) from Saccharomyces cerevisiae (strain ATCC 204508 / S288c) (Baker's yeast).